The sequence spans 131 residues: Large-conductance mechanosensitive channel (131 aa).

2 helical membrane passes run 14–34 and 71–91; these read VMDM…VTSL and GNFI…FLLV.

This sequence belongs to the MscL family. Homopentamer.

It is found in the cell inner membrane. Channel that opens in response to stretch forces in the membrane lipid bilayer. May participate in the regulation of osmotic pressure changes within the cell. The polypeptide is Large-conductance mechanosensitive channel (Dinoroseobacter shibae (strain DSM 16493 / NCIMB 14021 / DFL 12)).